The following is a 53-amino-acid chain: Bowman-Birk type proteinase inhibitor II-4 (53 aa).

4 cysteine pairs are disulfide-bonded: Cys-8–Cys-23, Cys-13–Cys-21, Cys-30–Cys-37, and Cys-34–Cys-49.

Belongs to the Bowman-Birk serine protease inhibitor family.

This chain is Bowman-Birk type proteinase inhibitor II-4, found in Triticum aestivum (Wheat).